The following is a 186-amino-acid chain: MKKTQYNNLVSSYARVLFHVSGSRLGIIRKEVEFLLAFFKDQRDVFVYLSHPMISFAHKKEVMLSINEHLSENLVKFIMVIFANKRSSLLILILEKFLSLARENENEFEITIKSAETLKESDIKIITESLSFLGKIIKVSNVVDPSILGGFVVRYGFNLIDASLKSYLDRLVDLSKMEILKVRNFV.

Belongs to the ATPase delta chain family. As to quaternary structure, F-type ATPases have 2 components, F(1) - the catalytic core - and F(0) - the membrane proton channel. F(1) has five subunits: alpha(3), beta(3), gamma(1), delta(1), epsilon(1). F(0) has three main subunits: a(1), b(2) and c(10-14). The alpha and beta chains form an alternating ring which encloses part of the gamma chain. F(1) is attached to F(0) by a central stalk formed by the gamma and epsilon chains, while a peripheral stalk is formed by the delta and b chains.

The protein resides in the cell membrane. Functionally, f(1)F(0) ATP synthase produces ATP from ADP in the presence of a proton or sodium gradient. F-type ATPases consist of two structural domains, F(1) containing the extramembraneous catalytic core and F(0) containing the membrane proton channel, linked together by a central stalk and a peripheral stalk. During catalysis, ATP synthesis in the catalytic domain of F(1) is coupled via a rotary mechanism of the central stalk subunits to proton translocation. This protein is part of the stalk that links CF(0) to CF(1). It either transmits conformational changes from CF(0) to CF(1) or is implicated in proton conduction. In Wolbachia pipientis wMel, this protein is ATP synthase subunit delta.